Reading from the N-terminus, the 1091-residue chain is Protein diaphanous (1091 aa).

The tract at residues 1–37 (MSRHEKTKSTGGGLLDSLFGRPSKSKGGTISSGTLAH) is disordered. A basic region region spans residues 1 to 56 (MSRHEKTKSTGGGLLDSLFGRPSKSKGGTISSGTLAHGGRPVSADNYVVPGVEDFE). A compositionally biased stretch (low complexity) spans 25-34 (SKGGTISSGT). The GBD/FH3 domain maps to 59–431 (IQQLSVAELD…QIVFHKGYCD (373 aa)). Residues 455-496 (KAKESKRSEEYEKKIEQLESAKQEAEAKAAHLEEKVKLMEAN) are a coiled coil. 3 disordered regions span residues 499-589 (AAPS…MMMG), 994-1021 (RLQE…DMDA), and 1039-1072 (GSAF…RTRV). Residues 512-572 (PMPPPPPGGG…MGGPPPPPMP (61 aa)) are compositionally biased toward pro residues. Residues 512–596 (PMPPPPPGGG…MMGPMVPVLP (85 aa)) enclose the FH1 domain. In terms of domain architecture, FH2 spans 601–1001 (PKKKWDVKNP…KRRLQEAREQ (401 aa)). Basic and acidic residues predominate over residues 994–1010 (RLQEAREQSAREQQERQ). Residues 1022–1054 (PQTQEGVMDSLLEALQTGSAFGQRNRQARRQRP) form the DAD domain.

This sequence belongs to the formin homology family. Diaphanous subfamily. As to quaternary structure, may interact (via CBD/FH3 domain) with Rho1.

The protein resides in the cytoplasm. Its subcellular location is the cytoskeleton. The protein localises to the cleavage furrow. It localises to the apical cell membrane. Functionally, required for cytokinesis in both mitosis and meiosis. Has a role in actin cytoskeleton organization and is essential for many, if not all, actin-mediated events involving membrane invagination. May serve as a mediator between signaling molecules and actin organizers at specific phases of the cell cycle. Possible component of the contractile ring or may control its function. The protein is Protein diaphanous (dia) of Drosophila melanogaster (Fruit fly).